We begin with the raw amino-acid sequence, 115 residues long: General stress protein 17M (115 aa).

This is General stress protein 17M (yflT) from Bacillus subtilis (strain 168).